The primary structure comprises 180 residues: dCTP deaminase, dUMP-forming (180 aa).

DCTP contacts are provided by residues Arg-100–Arg-105, Asp-117, Thr-125–Glu-127, Gln-146, Tyr-160, and Gln-167. Residue Glu-127 is the Proton donor/acceptor of the active site.

This sequence belongs to the dCTP deaminase family. Homotrimer.

It catalyses the reaction dCTP + 2 H2O = dUMP + NH4(+) + diphosphate. It functions in the pathway pyrimidine metabolism; dUMP biosynthesis; dUMP from dCTP: step 1/1. Functionally, bifunctional enzyme that catalyzes both the deamination of dCTP to dUTP and the hydrolysis of dUTP to dUMP without releasing the toxic dUTP intermediate. The chain is dCTP deaminase, dUMP-forming from Persephonella marina (strain DSM 14350 / EX-H1).